The primary structure comprises 236 residues: Small ribosomal subunit protein uS3 (236 aa).

The KH type-2 domain occupies 39–107; it reads IRKFLKREMY…EVFINIKEAK (69 aa). Positions 214-229 are enriched in basic and acidic residues; that stretch reads PEKKEESKSGDKEVRS. Residues 214–236 form a disordered region; sequence PEKKEESKSGDKEVRSKSRRGRQ.

This sequence belongs to the universal ribosomal protein uS3 family. As to quaternary structure, part of the 30S ribosomal subunit. Forms a tight complex with proteins S10 and S14.

Binds the lower part of the 30S subunit head. Binds mRNA in the 70S ribosome, positioning it for translation. The polypeptide is Small ribosomal subunit protein uS3 (Helicobacter hepaticus (strain ATCC 51449 / 3B1)).